We begin with the raw amino-acid sequence, 186 residues long: Probable chorismate pyruvate-lyase (186 aa).

Substrate-binding residues include Arg80, Leu118, and Glu170.

It belongs to the UbiC family.

It is found in the cytoplasm. The enzyme catalyses chorismate = 4-hydroxybenzoate + pyruvate. The protein operates within cofactor biosynthesis; ubiquinone biosynthesis. In terms of biological role, removes the pyruvyl group from chorismate, with concomitant aromatization of the ring, to provide 4-hydroxybenzoate (4HB) for the ubiquinone pathway. This is Probable chorismate pyruvate-lyase from Pseudomonas syringae pv. syringae (strain B728a).